The primary structure comprises 238 residues: Survival of motor neuron-related-splicing factor 30 (238 aa).

The 61-residue stretch at 72–132 (SWKVGDKCMA…KPVEEGRKAK (61 aa)) folds into the Tudor domain. Positions 142–160 (KKEMIAQQREYKKKKALKK) match the Nuclear localization signal motif. Ser-201 is modified (phosphoserine). Lys-219 is modified (N6-acetyllysine).

The protein belongs to the SMN family. In terms of assembly, associates with spliceosomes. Associates with U4/U5/U6 tri-snRNP and with U2 snRNP. Interacts (via Tudor domain) with SNRPD3 (via C-terminus); the interaction is direct. As to expression, detected at intermediate levels in skeletal muscle, and at low levels in heart and pancreas.

It localises to the nucleus speckle. The protein localises to the nucleus. The protein resides in the cajal body. Involved in spliceosome assembly. The sequence is that of Survival of motor neuron-related-splicing factor 30 (SMNDC1) from Homo sapiens (Human).